A 363-amino-acid chain; its full sequence is Protein Wnt-5b (363 aa).

The signal sequence occupies residues 1–21; it reads MDVRMNQGHLLLAVTLIVCNS. C87 and C98 are disulfide-bonded. 2 N-linked (GlcNAc...) asparagine glycosylation sites follow: N97 and N103. 10 disulfides stabilise this stretch: C137–C145, C147–C165, C221–C235, C223–C230, C292–C323, C308–C318, C322–C362, C338–C353, C340–C350, and C345–C346. S227 is lipidated: O-palmitoleoyl serine; by PORCN. N-linked (GlcNAc...) asparagine glycans are attached at residues N295 and N309.

It belongs to the Wnt family. Palmitoleoylation is required for efficient binding to frizzled receptors. Depalmitoleoylation leads to Wnt signaling pathway inhibition.

The protein resides in the secreted. Its subcellular location is the extracellular space. The protein localises to the extracellular matrix. Its function is as follows. Ligand for members of the frizzled family of seven transmembrane receptors. Can activate or inhibit canonical Wnt signaling, depending on receptor context. Required during embryogenesis for extension of the primary anterior-posterior axis. Regulates convergent extension movements and hypaxial myogenesis during gastrulation via activation of non-canonical Wnt signaling. The sequence is that of Protein Wnt-5b (wnt5b) from Danio rerio (Zebrafish).